A 202-amino-acid polypeptide reads, in one-letter code: Venom allergen 5 (202 aa).

4 disulfide bridges follow: Cys4–Cys16, Cys8–Cys101, Cys26–Cys94, and Cys168–Cys185. In terms of domain architecture, SCP spans 46–187 (KQHNEFRQKV…WHRHYLVCNY (142 aa)).

Belongs to the CRISP family. Venom allergen 5-like subfamily. As to expression, expressed by the venom gland.

It localises to the secreted. The polypeptide is Venom allergen 5 (Vespa mandarinia (Asian giant hornet)).